The sequence spans 411 residues: Na(+)/H(+) antiporter NhaA 2 (411 aa).

Transmembrane regions (helical) follow at residues valine 18–valine 38, leucine 59–leucine 79, leucine 97–isoleucine 117, glycine 127–glycine 147, leucine 167–leucine 187, tryptophan 218–leucine 238, proline 261–serine 281, valine 297–isoleucine 317, valine 338–isoleucine 358, and isoleucine 366–leucine 386.

It belongs to the NhaA Na(+)/H(+) (TC 2.A.33) antiporter family.

It is found in the cell membrane. It catalyses the reaction Na(+)(in) + 2 H(+)(out) = Na(+)(out) + 2 H(+)(in). Functionally, na(+)/H(+) antiporter that extrudes sodium in exchange for external protons. This Rhodococcus jostii (strain RHA1) protein is Na(+)/H(+) antiporter NhaA 2.